The primary structure comprises 1223 residues: RNA-binding protein 20 (1223 aa).

Disordered regions lie at residues 1–59 (MVLA…QAGL), 238–288 (QAYG…PTSQ), and 306–381 (GEVG…GARR). Residues 29-57 (APAPPAPPGPRGMQPPPPPPPPPPPPPQA) are compositionally biased toward pro residues. Composition is skewed to polar residues over residues 238–261 (QAYG…SGSV) and 314–331 (GPNS…QSKP). A U1-type zinc finger spans residues 410 to 444 (HLPHICSICDKKVFDLKDWELHVKGKLHAQKCLLF). The RRM domain maps to 520 to 595 (RVVHICNLPE…EKLLIRMSKR (76 aa)). Residues 626 to 636 (EADRYGPERPR) show a composition bias toward basic and acidic residues. Disordered regions lie at residues 626–902 (EADR…TNME), 971–995 (EISL…DVEM), and 1042–1102 (MSSP…STQE). The tract at residues 630-657 (YGPERPRSRSPVSRSLSPRSHTPSFTSC) is RS. A phosphoserine mark is found at serine 637, serine 639, serine 642, serine 644, serine 662, and serine 681. The span at 638 to 662 (RSPVSRSLSPRSHTPSFTSCSSSHS) shows a compositional bias: low complexity. Basic and acidic residues-rich tracts occupy residues 676 to 711 (DSWE…MWAH) and 718 to 737 (RQVD…GYRE). Positions 742-752 (SGSPSSLHSVS) are enriched in low complexity. Serine 744 is subject to Phosphoserine. 2 stretches are compositionally biased toward basic and acidic residues: residues 755–774 (KSRE…DKYL) and 786–852 (RKDE…KEEQ). Phosphoserine occurs at positions 803, 861, 872, 887, 889, 973, 976, and 1044. Over residues 864-884 (RQEKETESSDAENTRTRKEQD) the composition is skewed to basic and acidic residues. The span at 1083–1102 (STPTETDLQSQACQGVSTQE) shows a compositional bias: polar residues. A phosphoserine mark is found at serine 1111 and serine 1116. Residues 1157–1188 (FYCKLCGLFYTSEEMAKMSHCRSAVHYRNLQK) form a Matrin-type zinc finger. The disordered stretch occupies residues 1197–1223 (GLKETEGAGSPRPEDSGIVPHFERKKL). Serine 1206 bears the Phosphoserine mark.

In terms of assembly, associates with components of the U1 and U2 U1 small nuclear ribonucleoprotein complexes. Phosphorylation regulates the subcellular localization. Phosphorylation of Ser-637 and Ser-639 in the RS (arginine/serine-rich) region promotes nuclear localization of the protein. In contrast, phosphorylation of the C-terminal disordered region promotes localization to cytoplasmic ribonucleoprotein granules.

It localises to the nucleus. It is found in the cytoplasm. The protein localises to the cytoplasmic ribonucleoprotein granule. Its function is as follows. RNA-binding protein that acts as a regulator of mRNA splicing of a subset of genes encoding key structural proteins involved in cardiac development, such as TTN (Titin), CACNA1C, CAMK2D or PDLIM5/ENH. Acts as a repressor of mRNA splicing: specifically binds the 5'UCUU-3' motif that is predominantly found within intronic sequences of pre-mRNAs, leading to the exclusion of specific exons in target transcripts. RBM20-mediated exon skipping is hormone-dependent and is essential for TTN isoform transition in both cardiac and skeletal muscles. RBM20-mediated exon skipping of TTN provides substrates for the formation of circular RNA (circRNAs) from the TTN transcripts. Together with RBM24, promotes the expression of short isoforms of PDLIM5/ENH in cardiomyocytes. The protein is RNA-binding protein 20 of Sus scrofa (Pig).